A 165-amino-acid polypeptide reads, in one-letter code: Phosphopantetheine adenylyltransferase (165 aa).

Ser10 provides a ligand contact to substrate. Residues 10-11 (SF) and His18 contribute to the ATP site. Substrate contacts are provided by Lys42, Thr79, and Arg93. ATP is bound by residues 94–96 (GLR), Glu104, and 129–135 (VRPITAT).

This sequence belongs to the bacterial CoaD family. Homohexamer. The cofactor is Mg(2+).

The protein resides in the cytoplasm. It catalyses the reaction (R)-4'-phosphopantetheine + ATP + H(+) = 3'-dephospho-CoA + diphosphate. It functions in the pathway cofactor biosynthesis; coenzyme A biosynthesis; CoA from (R)-pantothenate: step 4/5. In terms of biological role, reversibly transfers an adenylyl group from ATP to 4'-phosphopantetheine, yielding dephospho-CoA (dPCoA) and pyrophosphate. In Rhodopseudomonas palustris (strain BisA53), this protein is Phosphopantetheine adenylyltransferase.